The chain runs to 316 residues: Biotin synthase (316 aa).

The 225-residue stretch at 36–260 folds into the Radical SAM core domain; the sequence is NKIQISMLLN…LMPKSYIRLA (225 aa). [4Fe-4S] cluster-binding residues include C51, C55, and C58. 4 residues coordinate [2Fe-2S] cluster: C95, C126, C186, and R258.

It belongs to the radical SAM superfamily. Biotin synthase family. In terms of assembly, homodimer. [4Fe-4S] cluster serves as cofactor. [2Fe-2S] cluster is required as a cofactor.

It catalyses the reaction (4R,5S)-dethiobiotin + (sulfur carrier)-SH + 2 reduced [2Fe-2S]-[ferredoxin] + 2 S-adenosyl-L-methionine = (sulfur carrier)-H + biotin + 2 5'-deoxyadenosine + 2 L-methionine + 2 oxidized [2Fe-2S]-[ferredoxin]. Its pathway is cofactor biosynthesis; biotin biosynthesis; biotin from 7,8-diaminononanoate: step 2/2. In terms of biological role, catalyzes the conversion of dethiobiotin (DTB) to biotin by the insertion of a sulfur atom into dethiobiotin via a radical-based mechanism. The polypeptide is Biotin synthase (Lawsonia intracellularis (strain PHE/MN1-00)).